The sequence spans 996 residues: Low-density lipoprotein receptor-related protein 8 (996 aa).

The signal sequence occupies residues 1–28 (MGRPELGALRPLALLLLLLLQLQHLSAA). Residues 29-858 (DPLPGGQGPV…GSQMGSTVTA (830 aa)) are Extracellular-facing. LDL-receptor class A domains are found at residues 40–76 (ECEEDQFRCRNERCIPLVWRCDEDNDCSDNSDEDDCP), 79–117 (TCADSDFTCDNGHCIPERWKCDGEEECPDGSDESKATCS), 120–158 (ECPAEKLSCGPTSHKCVPASWRCDGEKDCEGGADEAGCP), 160–196 (LCAPHEFQCSNRSCLASVFVCDGDDDCGDGSDERGCS), 199–238 (ACPPREFRCGGGGTCIPERWVCDRQFDCEDRSDEAAELCG), 250–287 (ACAPTAQFTCRSGECIHLGWRCDGDRDCKDKSDEADCS), 290–326 (PCRENEFQCGDGTCVLAIKRCNQERDCPDGSDEAGCL), and 330–369 (TCEGPRRFQCKSGECVDGGKVCDDQRDCRDWSDEPQKVCG). Cystine bridges form between Cys41/Cys53, Cys48/Cys66, Cys60/Cys75, Cys80/Cys92, Cys87/Cys105, Cys99/Cys116, Cys121/Cys135, Cys128/Cys148, Cys142/Cys157, Cys161/Cys173, Cys168/Cys186, Cys180/Cys195, Cys200/Cys213, Cys207/Cys226, Cys220/Cys237, Cys251/Cys264, Cys259/Cys277, Cys271/Cys286, Cys291/Cys303, Cys298/Cys316, Cys310/Cys325, Cys331/Cys344, Cys339/Cys357, Cys351/Cys368, Cys373/Cys384, Cys380/Cys393, Cys395/Cys407, Cys413/Cys423, Cys419/Cys432, and Cys434/Cys447. Residues Trp58, Asp61, Asp63, Asp65, Asp71, and Glu72 each coordinate Ca(2+). N-linked (GlcNAc...) asparagine glycosylation is present at Asn170. Residues 364-408 (PQKVCGLNECLHNNGGCSHICTDLKIGFECTCPAGFQLLDQKTCG) enclose the EGF-like 1 domain. The 40-residue stretch at 409–448 (DIDECQDPDACSQICVNYKGYFKCECHPGYEMDTLTKNCK) folds into the EGF-like 2; calcium-binding domain. 5 LDL-receptor class B repeats span residues 495-541 (NRIY…DWVH), 542-584 (KHIY…DPLR), 585-628 (GFMY…DLLS), 629-671 (QRLY…AVFE), and 672-714 (DKVF…FHEL). An N-linked (GlcNAc...) asparagine glycan is attached at Asn551. Positions 773-831 (STSTTTLASAMTRTVPATTRAPGTTIHDPTYQNHSTETPSQTAAAPHSVNVPRAPSTSP) are clustered O-linked oligosaccharides. A disordered region spans residues 778 to 851 (TLASAMTRTV…SQHYGNEGSQ (74 aa)). Positions 802–815 (TYQNHSTETPSQTA) are enriched in polar residues. N-linked (GlcNAc...) asparagine glycosylation occurs at Asn805. Residues 824–839 (PRAPSTSPSTPSPATS) are compositionally biased toward low complexity. An N-linked (GlcNAc...) asparagine glycan is attached at Asn840. Over residues 840–851 (NHSQHYGNEGSQ) the composition is skewed to polar residues. A helical membrane pass occupies residues 859–881 (AVIGVIVPIVVIALLCMSGYLIW). Residues 882–996 (RNWKRKNTKS…ALSLEDDGLP (115 aa)) lie on the Cytoplasmic side of the membrane.

It belongs to the LDLR family. In terms of assembly, homooligomer. Interacts with VLDLR. Reelin associates with two or more receptor molecules. Interacts with DAB1 and JNK-interacting proteins. Interacts with SNX17. Interacts with PCSK9. Interacts with MDK; this interaction is calcium dependent. Interacts with CLU. O-glycosylated. Some alternatively spliced isoforms lack the O-linked sugar domain. Post-translationally, undergoes sequential, furin and gamma-secretase dependent, proteolytic processing, resulting in the extracellular release of the entire ligand-binding domain as a soluble polypeptide and in the intracellular domain (ICD) release into the cytoplasm. The gamma-secretase-dependent proteolytical processing occurs after the bulk of the extracellular domain has been shed, in a furin-dependent manner, in alternatively spliced isoforms carrying the furin cleavage site. Hypoglycosylation (mainly hypo-O-glycosylation) leads to increased extracellular cleavage, which in turn results in accelerating release of the intracellular domain (ICD) by the gamma-secretase. The resulting receptor fragment is able to inhibit Reelin signaling and in particular the Reelin-induced DAB1 phosphorylation. In terms of processing, tyrosine phosphorylated upon apoE binding. Ubiquitinated by MYLIP leading to degradation. As to expression, expressed in neurons throughout the brain, with strong expression in pyramidal neurons of the hippocampus, granule cells of the dentate gyrus, cortical neurons and Purkinje cells of the cerebellum. Also expressed in the epithelium of the choroid plexus and of the blood vessels (apical expression), as well as in the epididymis.

It is found in the cell membrane. The protein localises to the secreted. In terms of biological role, cell surface receptor for Reelin (RELN) and apolipoprotein E (apoE)-containing ligands. LRP8 participates in transmitting the extracellular Reelin signal to intracellular signaling processes, by binding to DAB1 on its cytoplasmic tail. Reelin acts via both the VLDL receptor (VLDLR) and LRP8 to regulate DAB1 tyrosine phosphorylation and microtubule function in neurons. LRP8 has higher affinity for Reelin than VLDLR. LRP8 is thus a key component of the Reelin pathway which governs neuronal layering of the forebrain during embryonic brain development. Binds the endoplasmic reticulum resident receptor-associated protein (RAP). Binds dimers of beta 2-glycoprotein I and may be involved in the suppression of platelet aggregation in the vasculature. Highly expressed in the initial segment of the epididymis, where it affects the functional expression of clusterin and phospholipid hydroperoxide glutathione peroxidase (PHGPx), two proteins required for sperm maturation. May also function as an endocytic receptor. Not required for endocytic uptake of SEPP1 in the kidney which is mediated by LRP2. Together with its ligand, apolipoprotein E (apoE), may indirectly play a role in the suppression of the innate immune response by controlling the survival of myeloid-derived suppressor cells. This chain is Low-density lipoprotein receptor-related protein 8 (Lrp8), found in Mus musculus (Mouse).